A 105-amino-acid polypeptide reads, in one-letter code: MYAVVASGGKQHRVAVGDVVDVELLSGEPGAAVNLPAVLLVDGESVTHDADALASVEVTAEVVGVVKGPKIRIHKFKNKTGYHKRQGHRQKYTRLKVTGIETGKA.

Belongs to the bacterial ribosomal protein bL21 family. Part of the 50S ribosomal subunit. Contacts protein L20.

Functionally, this protein binds to 23S rRNA in the presence of protein L20. In Parafrankia sp. (strain EAN1pec), this protein is Large ribosomal subunit protein bL21.